The primary structure comprises 621 residues: Chaperone protein HtpG (621 aa).

The segment at 1 to 328 (MTQEKKKFDA…SEDLPLNISR (328 aa)) is a; substrate-binding. The interval 329-544 (ESLQHNNVLE…DTAMDIRMER (216 aa)) is b. The interval 545 to 621 (FLIEQKQIAS…LNDILQKAIL (77 aa)) is c.

Belongs to the heat shock protein 90 family. As to quaternary structure, homodimer.

It localises to the cytoplasm. Its function is as follows. Molecular chaperone. Has ATPase activity. The protein is Chaperone protein HtpG of Rickettsia typhi (strain ATCC VR-144 / Wilmington).